We begin with the raw amino-acid sequence, 120 residues long: Large ribosomal subunit protein uL18 (120 aa).

It belongs to the universal ribosomal protein uL18 family. In terms of assembly, part of the 50S ribosomal subunit; part of the 5S rRNA/L5/L18/L25 subcomplex. Contacts the 5S and 23S rRNAs.

Its function is as follows. This is one of the proteins that bind and probably mediate the attachment of the 5S RNA into the large ribosomal subunit, where it forms part of the central protuberance. This is Large ribosomal subunit protein uL18 from Bartonella bacilliformis (strain ATCC 35685 / KC583 / Herrer 020/F12,63).